A 100-amino-acid polypeptide reads, in one-letter code: Large ribosomal subunit protein uL23 (100 aa).

This sequence belongs to the universal ribosomal protein uL23 family. In terms of assembly, part of the 50S ribosomal subunit. Contacts protein L29, and trigger factor when it is bound to the ribosome.

In terms of biological role, one of the early assembly proteins it binds 23S rRNA. One of the proteins that surrounds the polypeptide exit tunnel on the outside of the ribosome. Forms the main docking site for trigger factor binding to the ribosome. This chain is Large ribosomal subunit protein uL23, found in Xylella fastidiosa (strain M23).